The following is a 208-amino-acid chain: Uracil phosphoribosyltransferase (208 aa).

5-phospho-alpha-D-ribose 1-diphosphate-binding positions include Arg78, Arg103, and 130–138; that span reads DPMLATANS. Uracil-binding positions include Ile193 and 198–200; that span reads GDA. Residue Asp199 coordinates 5-phospho-alpha-D-ribose 1-diphosphate.

It belongs to the UPRTase family. Mg(2+) serves as cofactor.

The catalysed reaction is UMP + diphosphate = 5-phospho-alpha-D-ribose 1-diphosphate + uracil. It participates in pyrimidine metabolism; UMP biosynthesis via salvage pathway; UMP from uracil: step 1/1. Allosterically activated by GTP. In terms of biological role, catalyzes the conversion of uracil and 5-phospho-alpha-D-ribose 1-diphosphate (PRPP) to UMP and diphosphate. In Brucella ovis (strain ATCC 25840 / 63/290 / NCTC 10512), this protein is Uracil phosphoribosyltransferase.